The following is a 278-amino-acid chain: MGIRKYKPTTPGRRGSSVADFVEVTRSEPEKSLVRPLSKSGGRNSTGRITSRRRGGGHKRAYRVIDFRRHDKDGVPAKVAHIEYDPNRTARIALLHYADGEKRYIVAPNRLKQGDRIENGPAADIKPGNNLPLRNIPTGTVIHAVELRPGGGAKIARSAGSSVQLVAKDGPYAQLRMPSGEIRNVDARCRATIGEVGNAEQSNINWGKAGRMRWKGKRPSVRGVAMNPVDHPHGGGEGKTSGGRHPVSPWGQPEGRTRRPGKPSDKLIVRRRRTGKKR.

Disordered stretches follow at residues 1–58 and 210–278; these read MGIR…GGGH and GRMR…GKKR. Over residues 23-33 the composition is skewed to basic and acidic residues; that stretch reads EVTRSEPEKSL. Residues 40–49 are compositionally biased toward low complexity; that stretch reads SGGRNSTGRI. Composition is skewed to basic residues over residues 210-220 and 269-278; these read GRMRWKGKRPS and VRRRRTGKKR.

The protein belongs to the universal ribosomal protein uL2 family. As to quaternary structure, part of the 50S ribosomal subunit. Forms a bridge to the 30S subunit in the 70S ribosome.

One of the primary rRNA binding proteins. Required for association of the 30S and 50S subunits to form the 70S ribosome, for tRNA binding and peptide bond formation. It has been suggested to have peptidyltransferase activity; this is somewhat controversial. Makes several contacts with the 16S rRNA in the 70S ribosome. This Beutenbergia cavernae (strain ATCC BAA-8 / DSM 12333 / CCUG 43141 / JCM 11478 / NBRC 16432 / NCIMB 13614 / HKI 0122) protein is Large ribosomal subunit protein uL2.